The following is a 339-amino-acid chain: Ketol-acid reductoisomerase (NADP(+)) (339 aa).

The KARI N-terminal Rossmann domain maps to 1–182 (MRVYYDRDAD…GGGRAGIIET (182 aa)). Residues 24–27 (YGSQ), Arg-48, Ser-51, Ser-53, and 83–86 (DELQ) contribute to the NADP(+) site. The active site involves His-108. Position 134 (Gly-134) interacts with NADP(+). Positions 183-328 (TFKEECETDL…EKLREMMPWI (146 aa)) constitute a KARI C-terminal knotted domain. Mg(2+) contacts are provided by Asp-191, Glu-195, Glu-227, and Glu-231. Residue Ser-252 participates in substrate binding.

Belongs to the ketol-acid reductoisomerase family. It depends on Mg(2+) as a cofactor.

The enzyme catalyses (2R)-2,3-dihydroxy-3-methylbutanoate + NADP(+) = (2S)-2-acetolactate + NADPH + H(+). It catalyses the reaction (2R,3R)-2,3-dihydroxy-3-methylpentanoate + NADP(+) = (S)-2-ethyl-2-hydroxy-3-oxobutanoate + NADPH + H(+). It participates in amino-acid biosynthesis; L-isoleucine biosynthesis; L-isoleucine from 2-oxobutanoate: step 2/4. It functions in the pathway amino-acid biosynthesis; L-valine biosynthesis; L-valine from pyruvate: step 2/4. In terms of biological role, involved in the biosynthesis of branched-chain amino acids (BCAA). Catalyzes an alkyl-migration followed by a ketol-acid reduction of (S)-2-acetolactate (S2AL) to yield (R)-2,3-dihydroxy-isovalerate. In the isomerase reaction, S2AL is rearranged via a Mg-dependent methyl migration to produce 3-hydroxy-3-methyl-2-ketobutyrate (HMKB). In the reductase reaction, this 2-ketoacid undergoes a metal-dependent reduction by NADPH to yield (R)-2,3-dihydroxy-isovalerate. The protein is Ketol-acid reductoisomerase (NADP(+)) of Azorhizobium caulinodans (strain ATCC 43989 / DSM 5975 / JCM 20966 / LMG 6465 / NBRC 14845 / NCIMB 13405 / ORS 571).